Here is a 557-residue protein sequence, read N- to C-terminus: Dihydroxy-acid dehydratase (557 aa).

A Mg(2+)-binding site is contributed by aspartate 78. A [2Fe-2S] cluster-binding site is contributed by cysteine 119. 2 residues coordinate Mg(2+): aspartate 120 and lysine 121. Position 121 is an N6-carboxylysine (lysine 121). Position 192 (cysteine 192) interacts with [2Fe-2S] cluster. Position 442 (glutamate 442) interacts with Mg(2+). Serine 468 acts as the Proton acceptor in catalysis.

The protein belongs to the IlvD/Edd family. In terms of assembly, homodimer. Requires [2Fe-2S] cluster as cofactor. The cofactor is Mg(2+).

The catalysed reaction is (2R)-2,3-dihydroxy-3-methylbutanoate = 3-methyl-2-oxobutanoate + H2O. The enzyme catalyses (2R,3R)-2,3-dihydroxy-3-methylpentanoate = (S)-3-methyl-2-oxopentanoate + H2O. The protein operates within amino-acid biosynthesis; L-isoleucine biosynthesis; L-isoleucine from 2-oxobutanoate: step 3/4. It participates in amino-acid biosynthesis; L-valine biosynthesis; L-valine from pyruvate: step 3/4. Functionally, functions in the biosynthesis of branched-chain amino acids. Catalyzes the dehydration of (2R,3R)-2,3-dihydroxy-3-methylpentanoate (2,3-dihydroxy-3-methylvalerate) into 2-oxo-3-methylpentanoate (2-oxo-3-methylvalerate) and of (2R)-2,3-dihydroxy-3-methylbutanoate (2,3-dihydroxyisovalerate) into 2-oxo-3-methylbutanoate (2-oxoisovalerate), the penultimate precursor to L-isoleucine and L-valine, respectively. The protein is Dihydroxy-acid dehydratase of Bacillus cereus (strain AH820).